The following is a 540-amino-acid chain: Chaperonin GroEL 3 (540 aa).

ATP is bound by residues 30 to 33 (TLGP), lysine 51, 87 to 91 (DGTTT), glycine 415, 479 to 481 (NAA), and aspartate 495.

It belongs to the chaperonin (HSP60) family. Forms a cylinder of 14 subunits composed of two heptameric rings stacked back-to-back. Interacts with the co-chaperonin GroES.

It localises to the cytoplasm. It catalyses the reaction ATP + H2O + a folded polypeptide = ADP + phosphate + an unfolded polypeptide.. Together with its co-chaperonin GroES, plays an essential role in assisting protein folding. The GroEL-GroES system forms a nano-cage that allows encapsulation of the non-native substrate proteins and provides a physical environment optimized to promote and accelerate protein folding. The sequence is that of Chaperonin GroEL 3 from Burkholderia ambifaria (strain ATCC BAA-244 / DSM 16087 / CCUG 44356 / LMG 19182 / AMMD) (Burkholderia cepacia (strain AMMD)).